The primary structure comprises 131 residues: Profilin-4 (131 aa).

A disulfide bond links Cys13 and Cys115. The short motif at 81 to 97 is the Involved in PIP2 interaction element; it reads AVIRGKKGAGGITIKKT. Position 111 is a phosphothreonine (Thr111).

The protein belongs to the profilin family. As to quaternary structure, occurs in many kinds of cells as a complex with monomeric actin in a 1:1 ratio. Phosphorylated by MAP kinases.

The protein localises to the cytoplasm. It localises to the cytoskeleton. In terms of biological role, binds to actin and affects the structure of the cytoskeleton. At high concentrations, profilin prevents the polymerization of actin, whereas it enhances it at low concentrations. This is Profilin-4 from Phleum pratense (Common timothy).